A 573-amino-acid polypeptide reads, in one-letter code: MTQGPGGRAAPEPEAPTTFCALLPRMPQWKFAAPGSFLGRGPAAARVAGAAEAQPEPGVPALAAVLGACEPRCAAPCPLPALGRCRGSGSRGARGTPDVADEWVRKGGFIHKPAHGWLHPDARVLGPGVSYIVRYMGCIEVLRSMRSLDFNTRTQVTREAINRLHEAVPGVRGSWKKKAPNKALASILGKSNLRFAGMSISVNISVDGLNLSVPATRQIIANHHMQSISFASGGDTDMTDYVAYVAKDPINQRACHILECCEGLAQSVISTVGQAFELRFKQYLHSPPKAVVPPERLTGLEESAWGDGEVTADHDYYNSIPGKEPPLGGLVDSRLAVTQPCALTTLGGLGQGLSPAWRDVRGLPWDMGPSGAVPPGDGYVQADARGPHDYEEHLYVNTQGLDALELEDTSETPLQPEDSPKKDLFDMRPFEDALKLHECSVAAGITAASLPLEDQWPSPPTRRAPIAPTEEQLRQEPWYHGRMSRRAAEKLLRADGDFLVRDSITNPGQYVLTGMHAGQPKHLLLVDPEGVVRTKDVLFESISHLIDYHLKNGLPIVAAESELHLRGVVSREP.

In terms of domain architecture, PID spans 125–307; the sequence is LGPGVSYIVR…TGLEESAWGD (183 aa). In terms of domain architecture, SH2 spans 478-569; sequence WYHGRMSRRA…ESELHLRGVV (92 aa).

Interacts with the Trk receptors in a phosphotyrosine-dependent manner and MEGF12. Once activated, binds to GRB2. In terms of processing, phosphorylated on tyrosine by the Trk receptors.

Signaling adapter that couples activated growth factor receptors to signaling pathway in neurons. Involved in the signal transduction pathways of neurotrophin-activated Trk receptors in cortical neurons. In Rattus norvegicus (Rat), this protein is SHC-transforming protein 2 (Shc2).